We begin with the raw amino-acid sequence, 442 residues long: Xaa-Pro dipeptidase (442 aa).

Mn(2+)-binding residues include D245, D256, H338, E383, and E422.

This sequence belongs to the peptidase M24B family. Bacterial-type prolidase subfamily. It depends on Mn(2+) as a cofactor.

The enzyme catalyses Xaa-L-Pro dipeptide + H2O = an L-alpha-amino acid + L-proline. Its function is as follows. Splits dipeptides with a prolyl residue in the C-terminal position. The polypeptide is Xaa-Pro dipeptidase (Sodalis glossinidius (strain morsitans)).